The chain runs to 321 residues: MATH domain and coiled-coil domain-containing protein At3g58410 (321 aa).

One can recognise an MATH domain in the interval 6–128 (GKKFAWVIKN…NGELMIVAEV (123 aa)). A coiled-coil region spans residues 255–310 (KVDWLEKKLDQVRDKKEKERSCLAKLQETEETLLKLKQKCTELDALMDTEKAELSA).

The protein is MATH domain and coiled-coil domain-containing protein At3g58410 of Arabidopsis thaliana (Mouse-ear cress).